Reading from the N-terminus, the 138-residue chain is Small ribosomal subunit protein uS8c (138 aa).

Belongs to the universal ribosomal protein uS8 family. As to quaternary structure, part of the 30S ribosomal subunit.

Its subcellular location is the plastid. The protein resides in the chloroplast. One of the primary rRNA binding proteins, it binds directly to 16S rRNA central domain where it helps coordinate assembly of the platform of the 30S subunit. This Chlorella vulgaris (Green alga) protein is Small ribosomal subunit protein uS8c (rps8).